We begin with the raw amino-acid sequence, 321 residues long: Lipoyl synthase (321 aa).

C68, C73, C79, C94, C98, C101, and S308 together coordinate [4Fe-4S] cluster. Residues 80 to 297 form the Radical SAM core domain; it reads FNHGTATFMI…KAEAMAMGFT (218 aa).

Belongs to the radical SAM superfamily. Lipoyl synthase family. The cofactor is [4Fe-4S] cluster.

The protein localises to the cytoplasm. The catalysed reaction is [[Fe-S] cluster scaffold protein carrying a second [4Fe-4S](2+) cluster] + N(6)-octanoyl-L-lysyl-[protein] + 2 oxidized [2Fe-2S]-[ferredoxin] + 2 S-adenosyl-L-methionine + 4 H(+) = [[Fe-S] cluster scaffold protein] + N(6)-[(R)-dihydrolipoyl]-L-lysyl-[protein] + 4 Fe(3+) + 2 hydrogen sulfide + 2 5'-deoxyadenosine + 2 L-methionine + 2 reduced [2Fe-2S]-[ferredoxin]. Its pathway is protein modification; protein lipoylation via endogenous pathway; protein N(6)-(lipoyl)lysine from octanoyl-[acyl-carrier-protein]: step 2/2. Its function is as follows. Catalyzes the radical-mediated insertion of two sulfur atoms into the C-6 and C-8 positions of the octanoyl moiety bound to the lipoyl domains of lipoate-dependent enzymes, thereby converting the octanoylated domains into lipoylated derivatives. This chain is Lipoyl synthase, found in Yersinia enterocolitica serotype O:8 / biotype 1B (strain NCTC 13174 / 8081).